The chain runs to 437 residues: Type II methylase M.HgiEI (437 aa).

Positions 4 to 431 constitute an SAM-dependent MTase C5-type domain; the sequence is FRFIDLFAGI…KRLQCVKLFE (428 aa). Residue Cys75 is part of the active site.

The protein belongs to the class I-like SAM-binding methyltransferase superfamily. C5-methyltransferase family.

The enzyme catalyses a 2'-deoxycytidine in DNA + S-adenosyl-L-methionine = a 5-methyl-2'-deoxycytidine in DNA + S-adenosyl-L-homocysteine + H(+). Its function is as follows. A methylase that recognizes the double-stranded sequence 5'-GGWCC-3', methylates C-? on both strands, and protects the DNA from cleavage by the HgiEI endonuclease. This system is more active than isoschizomeric RM.HgiBI. The polypeptide is Type II methylase M.HgiEI (Herpetosiphon aurantiacus (Herpetosiphon giganteus)).